The following is an 864-amino-acid chain: E3 ubiquitin-protein ligase Itchy (864 aa).

One can recognise a C2 domain in the interval 1–115 (MSDSGPQLDS…LKSNNMKLEE (115 aa)). An N-acetylserine modification is found at Ser2. Polar residues predominate over residues 151–164 (NGETSCSESTTQND). The disordered stretch occupies residues 151 to 294 (NGETSCSEST…SQAPLPPGWE (144 aa)). Residues 165 to 174 (DGCRTRDDTR) are compositionally biased toward basic and acidic residues. The span at 195-206 (NGNNSPSLSNGG) shows a compositional bias: low complexity. At Ser199 the chain carries Phosphoserine; by MAPK8. The span at 210-224 (SRPPRPSRPPPPTPR) shows a compositional bias: pro residues. Phosphothreonine; by MAPK8 is present on Thr222. Low complexity predominate over residues 230 to 259 (NGSPSTNSDSDGSSTGSLPPTNTNVNTSTS). Ser232 is modified (phosphoserine; by MAPK8). 2 WW domains span residues 287–320 (APLPPGWEQRVDQHGRVYYVDHVEKRTTWDRPEP) and 319–352 (EPLPPGWERRVDNMGRIYYVDHFTRTTTWQRPTL). Position 346 is a phosphothreonine; by SGK3 (Thr346). The interval 356–432 (RNYEQWQLQR…RITQWEDPRS (77 aa)) is required for interaction with FYN. Residue Tyr381 is modified to Phosphotyrosine; by FYN. 2 WW domains span residues 399 to 432 (GPLPPGWEKRTDSNGRVYFVNHNTRITQWEDPRS) and 439 to 472 (KPLPEGWEMRFTVDGIPYFVDHNRRATTYIDPRT). Residue Ser411 is modified to Phosphoserine; by SGK3. In terms of domain architecture, HECT spans 530 to 864 (SPQDLRRRLW…IEETEGFGQE (335 aa)). Positions 535–544 (RRRLWVIFPG) are MAP kinase docking site. The Glycyl thioester intermediate role is filled by Cys832.

As to quaternary structure, monomer. Part of a ternary complex composed of SMAD3, ITCH/AIP4 and NEDD9/HEF1; within the complex NEDD9/HEF1 interacts (via N-terminus) with ITCH/AIP4 (via WW domains); the complex mediates ubiquitination and proteasomal degradation of NEDD9/HEF1. Interacts (via WW domains) with OCNL. Interacts (via WW domains) with NOTCH1. Interacts (via WW domains) JUN. Interacts with JUNB; the interaction promotes ITCH-mediated ubiquitination and degradation of JUNB. Interacts with FYN; the interaction phosphorylates ITCH on Tyr-381 decreasing binding of JUNB. Interacts (via WW domain 2) with N4BP1; the interaction inhibits the E3 ubiquitin-protein ligase activity. Interacts with NDFIP1 and NDFIP2; the interaction with NDFIP proteins activates the E3 ubiquitin-protein ligase and may induce its recruitment to exosomes. Interacts with ARHGEF7. Interacts with RNF11. Interacts (via the WW 1 domain) with NFE2 (via the PXY motif 1); the interaction promotes 'Lys-63'-linked ubiquitination of NFE2, retains it in the cytoplasm and prevents its transactivation activity. Interacts (via WW domains) with CXCR4 (via C-terminus); the interaction depends on CXCR4 phosphorylation. Found in a complex with E3 ligase DTX3L and ESCRT-0 components HGS and STAM. Interacts with DTX3L (via C-terminus); the interaction is increased upon CXCL12 stimulation and inhibits ITCH catalytic activity (the interaction is direct). Interacts with HGS. Interacts (via WW domains) with PCBP2 within a complex containing ITCH, MAVS and PCBP2. Interacts (via WW domains) with TXNIP (via C-terminus). Interacts with p15 BID. Interacts with ERBB4. Interacts with DTX1. Interacts with SPART. Interacts with SNX9 and SNX18. Interacts (via its WW domains) with ATN1. Interacts (via WW domains) with SGK3. Interacts with CBLC. Interacts with OTUD7B. Interacts (via WW domain 1,2 and 3) with PI4K2A; the interaction inhibits PI4K2A catalytic activity and promotes ITCH catalytic activity. Interacts with ARRDC4. Part of a complex containing ITCH, NDFIP1 and MAP3K7. Interacts with UBE2L3; the interaction is mediated by NDFIP1. Interacts with MAPK8/JNK1. Interacts (via WW domains) with ARRDC1 (via PPxY motifs); the interaction is direct and participates in the recruitment of the ubiquitin-protein ligase ITCH to the NOTCH1 receptor. Interacts (via WW domains) with ARRDC2. Interacts (via WW domains) with ARRDC3. Interacts directly with LDLRAD3; this interaction promotes ITCH auto-ubiquitination leading to its degradation. Interacts with ENTREP1; enhances the ubiquitination of CXCR4 by ITCH and its subsequent endocytosis. Interacts with USP12 and WDR48/UAF1; the interaction is more efficient when both USP12 and WDR48/UAF1 are involved and may facilitate the recruitment of the USP12 deubiquitinase complex to Notch. In terms of assembly, (Microbial infection) Interacts with Epstein-Barr virus LMP2A. In terms of processing, on T-cell activation, phosphorylation by the JNK cascade on serine and threonine residues surrounding the PRR domain accelerates the ubiquitination and degradation of JUN and JUNB. The increased ITCH catalytic activity due to phosphorylation by JNK1 may occur due to a conformational change disrupting the interaction between the PRR/WW motifs domain and the HECT domain and, thus exposing the HECT domain. Phosphorylation by FYN reduces interaction with JUNB and negatively controls JUN ubiquitination and degradation. Interacts directly with LDLRAD3; this interaction promotes ITCH auto-ubiquitination leading to its degradation. Monoubiquitinated. Autopolyubiquitinated with 'Lys-63' linkages which does not lead to protein degradation. Detected in uterus (at protein level). Widely expressed.

Its subcellular location is the cell membrane. It is found in the cytoplasm. The protein localises to the nucleus. The protein resides in the early endosome membrane. It localises to the endosome membrane. The enzyme catalyses S-ubiquitinyl-[E2 ubiquitin-conjugating enzyme]-L-cysteine + [acceptor protein]-L-lysine = [E2 ubiquitin-conjugating enzyme]-L-cysteine + N(6)-ubiquitinyl-[acceptor protein]-L-lysine.. It participates in protein modification; protein ubiquitination. With respect to regulation, activated by NDFIP1- and NDFIP2-binding. Activated by PI4K2A-binding. Inhibited by DTX3L-binding. Inhibited by N4BP1 binding. Functionally, acts as an E3 ubiquitin-protein ligase which accepts ubiquitin from an E2 ubiquitin-conjugating enzyme in the form of a thioester and then directly transfers the ubiquitin to targeted substrates. It catalyzes 'Lys-29'-, 'Lys-48'- and 'Lys-63'-linked ubiquitin conjugation. Involved in the control of inflammatory signaling pathways. Is an essential component of a ubiquitin-editing protein complex, comprising also TNFAIP3, TAX1BP1 and RNF11, that ensures the transient nature of inflammatory signaling pathways. Promotes the association of the complex after TNF stimulation. Once the complex is formed, TNFAIP3 deubiquitinates 'Lys-63' polyubiquitin chains on RIPK1 and catalyzes the formation of 'Lys-48'-polyubiquitin chains. This leads to RIPK1 proteasomal degradation and consequently termination of the TNF- or LPS-mediated activation of NFKB1. Ubiquitinates RIPK2 by 'Lys-63'-linked conjugation and influences NOD2-dependent signal transduction pathways. Regulates the transcriptional activity of several transcription factors involved in immune response. Ubiquitinates NFE2 by 'Lys-63' linkages and is implicated in the control of the development of hematopoietic lineages. Mediates JUN ubiquitination and degradation. Mediates JUNB ubiquitination and degradation. Critical regulator of type 2 helper T (Th2) cell cytokine production by inducing JUNB ubiquitination and degradation. Involved in the negative regulation of MAVS-dependent cellular antiviral responses. Ubiquitinates MAVS through 'Lys-48'-linked conjugation resulting in MAVS proteasomal degradation. Following ligand stimulation, regulates sorting of Wnt receptor FZD4 to the degradative endocytic pathway probably by modulating PI42KA activity. Ubiquitinates PI4K2A and negatively regulates its catalytic activity. Ubiquitinates chemokine receptor CXCR4 and regulates sorting of CXCR4 to the degradative endocytic pathway following ligand stimulation by ubiquitinating endosomal sorting complex required for transport ESCRT-0 components HGS and STAM. Targets DTX1 for lysosomal degradation and controls NOTCH1 degradation, in the absence of ligand, through 'Lys-29'-linked polyubiquitination. Ubiquitinates SNX9. Ubiquitinates MAP3K7 through 'Lys-48'-linked conjugation. Together with UBR5, involved in the regulation of apoptosis and reactive oxygen species levels through the ubiquitination and proteasomal degradation of TXNIP: catalyzes 'Lys-48'-/'Lys-63'-branched ubiquitination of TXNIP. ITCH synthesizes 'Lys-63'-linked chains, while UBR5 is branching multiple 'Lys-48'-linked chains of substrate initially modified. Mediates the antiapoptotic activity of epidermal growth factor through the ubiquitination and proteasomal degradation of p15 BID. Ubiquitinates BRAT1 and this ubiquitination is enhanced in the presence of NDFIP1. Ubiquitinates NEDD9/HEF1, resulting in proteasomal degradation of NEDD9/HEF1. The sequence is that of E3 ubiquitin-protein ligase Itchy (Itch) from Mus musculus (Mouse).